The primary structure comprises 415 residues: ATP-dependent Clp protease ATP-binding subunit ClpX (415 aa).

The ClpX-type ZB domain occupies 1 to 52 (MAESKNNKKRCSFCGRSENEVGFLITGMNGYICDSCATQAYEITQEAMGAGK). Positions 11, 14, 33, and 36 each coordinate Zn(2+). Position 121–128 (121–128 (STGTGKTL)) interacts with ATP.

It belongs to the ClpX chaperone family. Component of the ClpX-ClpP complex. Forms a hexameric ring that, in the presence of ATP, binds to fourteen ClpP subunits assembled into a disk-like structure with a central cavity, resembling the structure of eukaryotic proteasomes.

Functionally, ATP-dependent specificity component of the Clp protease. It directs the protease to specific substrates. Can perform chaperone functions in the absence of ClpP. The chain is ATP-dependent Clp protease ATP-binding subunit ClpX from Bacteroides fragilis (strain ATCC 25285 / DSM 2151 / CCUG 4856 / JCM 11019 / LMG 10263 / NCTC 9343 / Onslow / VPI 2553 / EN-2).